The following is a 199-amino-acid chain: V-type ATP synthase subunit E (199 aa).

This sequence belongs to the V-ATPase E subunit family.

Its function is as follows. Produces ATP from ADP in the presence of a proton gradient across the membrane. The polypeptide is V-type ATP synthase subunit E (Borreliella afzelii (strain PKo) (Borrelia afzelii)).